The primary structure comprises 357 residues: Outer membrane protein YedS (357 aa).

The first 21 residues, 1–21, serve as a signal peptide directing secretion; that stretch reads MKRKVLAMLVPALLVAGAANA.

It belongs to the Gram-negative porin family.

It is found in the cell outer membrane. Forms pores that allow passive diffusion of small molecules across the outer membrane. Plays a role in resistance to carbapenems; this carbapenem-resistant, noncarbapenemase-producing clinical isolate has a deletion in ompF and a mutated marR gene that does not induce expression of this protein. However if this gene is overexpressed, or if wild-type marR is introduced, this leads to decreased resistance to the carbapenem antibiotics ertapenem, imipenem and meropenem. This Escherichia coli protein is Outer membrane protein YedS.